A 216-amino-acid polypeptide reads, in one-letter code: 3-isopropylmalate dehydratase small subunit (216 aa).

The protein belongs to the LeuD family. LeuD type 1 subfamily. As to quaternary structure, heterodimer of LeuC and LeuD.

The catalysed reaction is (2R,3S)-3-isopropylmalate = (2S)-2-isopropylmalate. Its pathway is amino-acid biosynthesis; L-leucine biosynthesis; L-leucine from 3-methyl-2-oxobutanoate: step 2/4. In terms of biological role, catalyzes the isomerization between 2-isopropylmalate and 3-isopropylmalate, via the formation of 2-isopropylmaleate. The protein is 3-isopropylmalate dehydratase small subunit of Ralstonia nicotianae (strain ATCC BAA-1114 / GMI1000) (Ralstonia solanacearum).